The chain runs to 111 residues: MFKATARYIRVQPRKARLAAGLMRNLSVMEAQQQLNFSQLKAGRCLKKVLDSAVANAVLNENVKREQLSVIEVRVDAGPVYKRAKSKSRGGRSPILKRTSHLTVIVGEKER.

Belongs to the universal ribosomal protein uL22 family. Part of the 50S ribosomal subunit.

In terms of biological role, this protein binds specifically to 23S rRNA; its binding is stimulated by other ribosomal proteins, e.g. L4, L17, and L20. It is important during the early stages of 50S assembly. It makes multiple contacts with different domains of the 23S rRNA in the assembled 50S subunit and ribosome. Functionally, the globular domain of the protein is located near the polypeptide exit tunnel on the outside of the subunit, while an extended beta-hairpin is found that lines the wall of the exit tunnel in the center of the 70S ribosome. This is Large ribosomal subunit protein uL22 from Chlamydia caviae (strain ATCC VR-813 / DSM 19441 / 03DC25 / GPIC) (Chlamydophila caviae).